Consider the following 483-residue polypeptide: Glutamyl-tRNA(Gln) amidotransferase subunit A (483 aa).

Catalysis depends on charge relay system residues Lys76 and Ser151. The active-site Acyl-ester intermediate is the Ser175.

Belongs to the amidase family. GatA subfamily. In terms of assembly, heterotrimer of A, B and C subunits.

It carries out the reaction L-glutamyl-tRNA(Gln) + L-glutamine + ATP + H2O = L-glutaminyl-tRNA(Gln) + L-glutamate + ADP + phosphate + H(+). In terms of biological role, allows the formation of correctly charged Gln-tRNA(Gln) through the transamidation of misacylated Glu-tRNA(Gln) in organisms which lack glutaminyl-tRNA synthetase. The reaction takes place in the presence of glutamine and ATP through an activated gamma-phospho-Glu-tRNA(Gln). This is Glutamyl-tRNA(Gln) amidotransferase subunit A from Nitrosococcus oceani (strain ATCC 19707 / BCRC 17464 / JCM 30415 / NCIMB 11848 / C-107).